A 171-amino-acid polypeptide reads, in one-letter code: Signal peptidase complex catalytic subunit SEC11 (171 aa).

Over 1-6 (MNIRQQ) the chain is Cytoplasmic. Residues 7–24 (LVQLLNLAMVLSTAFMFW) form a helical; Signal-anchor for type II membrane protein membrane-spanning segment. Topologically, residues 25–171 (KGLGLVTNSN…MALSTLLTRE (147 aa)) are lumenal. Catalysis depends on charge relay system residues Ser44, His83, and Asp113. The C-terminal short (CTS) helix stretch occupies residues 157–168 (GLLGLMALSTLL).

Belongs to the peptidase S26B family. Component of the signal peptidase complex (SPC) composed of a catalytic subunit SEC11 and three accessory subunits SPC1, SPC2 and SPC3. The complex induces a local thinning of the ER membrane which is used to measure the length of the signal peptide (SP) h-region of protein substrates. This ensures the selectivity of the complex towards h-regions shorter than 18-20 amino acids. SPC associates with the translocon complex.

The protein localises to the endoplasmic reticulum membrane. The catalysed reaction is Cleavage of hydrophobic, N-terminal signal or leader sequences from secreted and periplasmic proteins.. Functionally, catalytic component of the signal peptidase complex (SPC) which catalyzes the cleavage of N-terminal signal sequences from nascent proteins as they are translocated into the lumen of the endoplasmic reticulum. Specifically cleaves N-terminal signal peptides that contain a hydrophobic alpha-helix (h-region) shorter than 18-20 amino acids. This is Signal peptidase complex catalytic subunit SEC11 (SEC11) from Komagataella phaffii (strain GS115 / ATCC 20864) (Yeast).